The chain runs to 2207 residues: DNA polymerase epsilon catalytic subunit A (2207 aa).

Disordered stretches follow at residues 1-20, 1201-1233, and 1934-1961; these read MPSR…AASF, SMEK…PFAS, and RPES…ENEE. C2075, C2078, C2113, and C2116 together coordinate Zn(2+). The CysA-type zinc-finger motif lies at 2075–2116; it reads CSACCLIRDLDLCRDEDVLPERGSGSGPDSATSSRPWCCPFC. [4Fe-4S] cluster is bound by residues C2147, C2150, C2162, and C2164. The CysB motif signature appears at 2147 to 2164; the sequence is CSKCGTLKISEFMEHCSC.

The protein belongs to the DNA polymerase type-B family. In terms of assembly, heterotetramer. Consists of 4 subunits: pol2, dpb2, dpb3 and dpb4. Requires [4Fe-4S] cluster as cofactor.

The protein localises to the nucleus. It catalyses the reaction DNA(n) + a 2'-deoxyribonucleoside 5'-triphosphate = DNA(n+1) + diphosphate. Its function is as follows. DNA polymerase II participates in chromosomal DNA replication. The sequence is that of DNA polymerase epsilon catalytic subunit A (pol2) from Emericella nidulans (strain FGSC A4 / ATCC 38163 / CBS 112.46 / NRRL 194 / M139) (Aspergillus nidulans).